The primary structure comprises 153 residues: 3-hydroxyacyl-[acyl-carrier-protein] dehydratase FabZ (153 aa).

His-47 is a catalytic residue.

This sequence belongs to the thioester dehydratase family. FabZ subfamily.

The protein resides in the cytoplasm. It carries out the reaction a (3R)-hydroxyacyl-[ACP] = a (2E)-enoyl-[ACP] + H2O. Its function is as follows. Involved in unsaturated fatty acids biosynthesis. Catalyzes the dehydration of short chain beta-hydroxyacyl-ACPs and long chain saturated and unsaturated beta-hydroxyacyl-ACPs. This is 3-hydroxyacyl-[acyl-carrier-protein] dehydratase FabZ from Dichelobacter nodosus (strain VCS1703A).